The sequence spans 208 residues: Anti-sigma-W factor RsiW (208 aa).

Topologically, residues 1–87 are cytoplasmic; it reads MSCPEQIVQL…ASVKRWFRTH (87 aa). Zn(2+)-binding residues include cysteine 3, histidine 30, cysteine 34, and cysteine 37. Residues 88 to 108 form a helical membrane-spanning segment; that stretch reads PVIAAAAVFIILMGGGFFNSW. Residues 109-208 are Extracellular-facing; it reads HNDHNFSVSK…LDAFNPNGEE (100 aa).

Belongs to the zinc-associated anti-sigma factor (ZAS) superfamily. Anti-sigma-W factor family. Forms a heterodimer with cognate sigma factor SigW, which probably prevents SigW from binding to DNA. Zn(2+) is required as a cofactor. Is processed by successive proteolytic events. First, the extracellular region of RsiW is cleaved by PrsW (site-1 cleavage) in response to cell envelope stresses. In a reconstituted E.coli system PrsW cuts between Ala-168 and Ser-169 followed by trimming by E.coli Tsp; the endogenous extracellular exopeptidase responsible for the event in B.subtilis has not been identified. Next, it undergoes cleavage at an intramembrane site (site-2 cleavage) mediated by RasP. This cleavage uncovers a cryptic proteolytic tag with conserved alanine residues in the transmembrane segment, that is recognized mainly by the ClpXP protease, which completely degrades the protein in the cytoplasm and leads to the induction of the sigma-W-controlled genes.

The protein localises to the cell membrane. Its function is as follows. The anti-sigma factor for extracytoplasmic function (ECF) sigma factor sigma-W (SigW). Holds SigW, its cognate ECF sigma factor, in an inactive form until released by regulated intramembrane proteolysis (RIP). SigW and RsiW mediate cell response to cell wall stress. RIP occurs when an extracytoplasmic signal triggers a concerted proteolytic cascade to transmit information and elicit cellular responses. The membrane-spanning regulatory substrate protein is first cut periplasmically (site-1 protease, S1P, PrsW), then within the membrane itself (site-2 protease, S2P, RasP), while cytoplasmic proteases finish degrading the anti-sigma factor, liberating sigma-W. The chain is Anti-sigma-W factor RsiW (rsiW) from Bacillus subtilis (strain 168).